The chain runs to 601 residues: Sulfite reductase [NADPH] flavoprotein alpha-component (601 aa).

One can recognise a Flavodoxin-like domain in the interval 64 to 202 (ITLISASQTG…AAAEWRARIV (139 aa)). FMN is bound by residues 70 to 75 (SQTGNA), 117 to 120 (STQG), and 153 to 162 (LGDTSYEFFC). One can recognise an FAD-binding FR-type domain in the interval 236 to 450 (EEPLVASLSV…IEHNDNFRLP (215 aa)). Residues Thr324, Ala358, 388–391 (RLYS), 406–408 (TVG), and 421–424 (GGAS) each bind FAD. Residues 521-522 (SR), 527-531 (KIYVQ), and Asp563 each bind NADP(+). Tyr601 provides a ligand contact to FAD.

This sequence belongs to the NADPH-dependent sulphite reductase flavoprotein subunit CysJ family. It in the N-terminal section; belongs to the flavodoxin family. The protein in the C-terminal section; belongs to the flavoprotein pyridine nucleotide cytochrome reductase family. Alpha(8)-beta(8). The alpha component is a flavoprotein, the beta component is a hemoprotein. FAD is required as a cofactor. FMN serves as cofactor.

It carries out the reaction hydrogen sulfide + 3 NADP(+) + 3 H2O = sulfite + 3 NADPH + 4 H(+). It functions in the pathway sulfur metabolism; hydrogen sulfide biosynthesis; hydrogen sulfide from sulfite (NADPH route): step 1/1. Functionally, component of the sulfite reductase complex that catalyzes the 6-electron reduction of sulfite to sulfide. This is one of several activities required for the biosynthesis of L-cysteine from sulfate. The flavoprotein component catalyzes the electron flow from NADPH -&gt; FAD -&gt; FMN to the hemoprotein component. The sequence is that of Sulfite reductase [NADPH] flavoprotein alpha-component from Enterobacter sp. (strain 638).